The chain runs to 906 residues: Protein translocase subunit SecA (906 aa).

ATP-binding positions include Gln-89, 107-111, and Asp-501; that span reads GEGKT. Zn(2+)-binding residues include Cys-891, Cys-893, Cys-902, and His-903.

It belongs to the SecA family. In terms of assembly, monomer and homodimer. Part of the essential Sec protein translocation apparatus which comprises SecA, SecYEG and auxiliary proteins SecDF-YajC and YidC. The cofactor is Zn(2+).

The protein localises to the cell inner membrane. It localises to the cytoplasm. It catalyses the reaction ATP + H2O + cellular proteinSide 1 = ADP + phosphate + cellular proteinSide 2.. In terms of biological role, part of the Sec protein translocase complex. Interacts with the SecYEG preprotein conducting channel. Has a central role in coupling the hydrolysis of ATP to the transfer of proteins into and across the cell membrane, serving both as a receptor for the preprotein-SecB complex and as an ATP-driven molecular motor driving the stepwise translocation of polypeptide chains across the membrane. In Parvibaculum lavamentivorans (strain DS-1 / DSM 13023 / NCIMB 13966), this protein is Protein translocase subunit SecA.